The sequence spans 234 residues: Sugar fermentation stimulation protein homolog (234 aa).

The protein belongs to the SfsA family.

This Bartonella quintana (strain Toulouse) (Rochalimaea quintana) protein is Sugar fermentation stimulation protein homolog.